Reading from the N-terminus, the 227-residue chain is Cytochrome c oxidase subunit 2 (227 aa).

At 1 to 14 (MAYPMQLGLQDATS) the chain is on the mitochondrial intermembrane side. The helical transmembrane segment at 15–45 (PIMEELTDFHDHTLMIVFLISTLVLYIISMM) threads the bilayer. The Mitochondrial matrix segment spans residues 46–59 (LTTKLTHTSTMDAQ). Residues 60–87 (EVETIWTVLPAVILVMIALPSLRILYMM) form a helical membrane-spanning segment. Residues 88–227 (DEINDPYLTV…QFESWASSMT (140 aa)) are Mitochondrial intermembrane-facing. 6 residues coordinate Cu cation: His-161, Cys-196, Glu-198, Cys-200, His-204, and Met-207. Glu-198 contacts Mg(2+).

This sequence belongs to the cytochrome c oxidase subunit 2 family. As to quaternary structure, component of the cytochrome c oxidase (complex IV, CIV), a multisubunit enzyme composed of 14 subunits. The complex is composed of a catalytic core of 3 subunits MT-CO1, MT-CO2 and MT-CO3, encoded in the mitochondrial DNA, and 11 supernumerary subunits COX4I, COX5A, COX5B, COX6A, COX6B, COX6C, COX7A, COX7B, COX7C, COX8 and NDUFA4, which are encoded in the nuclear genome. The complex exists as a monomer or a dimer and forms supercomplexes (SCs) in the inner mitochondrial membrane with NADH-ubiquinone oxidoreductase (complex I, CI) and ubiquinol-cytochrome c oxidoreductase (cytochrome b-c1 complex, complex III, CIII), resulting in different assemblies (supercomplex SCI(1)III(2)IV(1) and megacomplex MCI(2)III(2)IV(2)). Found in a complex with TMEM177, COA6, COX18, COX20, SCO1 and SCO2. Interacts with TMEM177 in a COX20-dependent manner. Interacts with COX20. Interacts with COX16. It depends on Cu cation as a cofactor.

The protein localises to the mitochondrion inner membrane. The catalysed reaction is 4 Fe(II)-[cytochrome c] + O2 + 8 H(+)(in) = 4 Fe(III)-[cytochrome c] + 2 H2O + 4 H(+)(out). Component of the cytochrome c oxidase, the last enzyme in the mitochondrial electron transport chain which drives oxidative phosphorylation. The respiratory chain contains 3 multisubunit complexes succinate dehydrogenase (complex II, CII), ubiquinol-cytochrome c oxidoreductase (cytochrome b-c1 complex, complex III, CIII) and cytochrome c oxidase (complex IV, CIV), that cooperate to transfer electrons derived from NADH and succinate to molecular oxygen, creating an electrochemical gradient over the inner membrane that drives transmembrane transport and the ATP synthase. Cytochrome c oxidase is the component of the respiratory chain that catalyzes the reduction of oxygen to water. Electrons originating from reduced cytochrome c in the intermembrane space (IMS) are transferred via the dinuclear copper A center (CU(A)) of subunit 2 and heme A of subunit 1 to the active site in subunit 1, a binuclear center (BNC) formed by heme A3 and copper B (CU(B)). The BNC reduces molecular oxygen to 2 water molecules using 4 electrons from cytochrome c in the IMS and 4 protons from the mitochondrial matrix. The polypeptide is Cytochrome c oxidase subunit 2 (MT-CO2) (Cratogeomys bursarius (Plains pocket gopher)).